Reading from the N-terminus, the 1503-residue chain is Mitogen-activated protein kinase-binding protein 1 (1503 aa).

WD repeat units lie at residues 89 to 130 (SSRK…QVAE), 133 to 174 (EHKY…VVAS), 176 to 214 (KVSSRVTAVSFSEDCSYFVTAGNRHIKFWYLDDSKTSKV), 271 to 310 (VELRTTVAHCISVTQEYIFCGCADGTVRLFNPSNLHFLST), 337 to 376 (ARYPDTIALTFDPTNQWLSCVYNDHSIYVWDVRDPKKVGK), 382 to 431 (YHSS…VHGS), 472 to 511 (DPRVGIRSVCISPNGQHLASGDRMGTLRIHELQSLSEMLK), 514 to 556 (AHDS…SLQQ), 560 to 601 (EHSS…EGVQ), 609 to 648 (VRKTTLYDMDVEPSWKYTAIGCQDRNIRIFNISSGKQKKL), 654 to 693 (GEDGTLIKVQTDPSGIYIATSCSDKNLSIFDFSSGECVAT), and 696 to 735 (GHSEIVTGMKFSNDCKHLISVSGDSCIFVWRLSSEMTISM). Disordered stretches follow at residues 745-817 (RQRG…SSPA), 874-917 (LAPS…RLQT), and 951-1176 (VYPE…SWAS). Residues 784–796 (KEGEDEGTEEEEL) are compositionally biased toward acidic residues. Composition is skewed to polar residues over residues 905-917 (CVSQNERAPRLQT) and 957-972 (DSPTMDTSAFQVQAPT). Positions 1028–1043 (DLEEPAEGDEDEEEEG) are enriched in acidic residues. The segment covering 1058-1068 (PDQEQFLKQHF) has biased composition (basic and acidic residues). Residues 1089-1129 (SQSISSRFLLQVQTSPLREPSLSSSGLALTSRPDQVSQVSG) are compositionally biased toward polar residues. Residue S1193 is modified to Phosphoserine. Disordered stretches follow at residues 1217 to 1238 (QGSLGSLPQAGGCSSQPHSYQN) and 1369 to 1391 (QGPESLQPLSPEKTRNPVESSRP).

In terms of assembly, can form homodimers (via C-terminus). Interacts (via C-terminus) with WDR62 (via C-terminus). Interacts with MAPK9. Interacts (via N-terminus) with NOD2; the interaction is enhanced in presence of muramyl dipeptide (MDP). Interacts with MAPK10. As to expression, ubiquitously expressed. Highest expression observed in brain.

It localises to the cytoplasm. The protein localises to the nucleus. It is found in the cytoskeleton. The protein resides in the spindle pole. Its function is as follows. Negative regulator of NOD2 function. It down-regulates NOD2-induced processes such as activation of NF-kappa-B signaling, IL8 secretion and antibacterial response. Involved in JNK signaling pathway. The sequence is that of Mitogen-activated protein kinase-binding protein 1 (Mapkbp1) from Mus musculus (Mouse).